The sequence spans 325 residues: MAKAVDKKFCWEIKNFSSLNSERCHSVPVVIGDCKWRLVAFPKGYKADYLSLYLEVADFKSLPSGWRRYVKFRACIVNQLSQELSVQQETQRWFDQNAPGWGFENMLLLTELNAKDGGFLVNGQVMIVAEVEFLEVIGTLDESEEIIKSSDLINKTQEVAQQVKEIIQPNDLINKTQEVAQQVKESIDVNGFQVLPSQVESVRRIFKKHPDIAVGFQVKNQHLRKTFMNFLVNVIETMCQSLQELSNEDLVEVDIALTYLKDAGFKVDWLEKKLDHVKEKKEKEQSGLIILQGIEQQLHELMHKCEKKKSEVLSVGAPLKFDDVV.

Positions 6 to 131 (DKKFCWEIKN…NGQVMIVAEV (126 aa)) constitute an MATH domain. The stretch at 266–315 (KVDWLEKKLDHVKEKKEKEQSGLIILQGIEQQLHELMHKCEKKKSEVLSV) forms a coiled coil.

In Arabidopsis thaliana (Mouse-ear cress), this protein is MATH domain and coiled-coil domain-containing protein At3g58340.